A 340-amino-acid chain; its full sequence is 4-hydroxy-3-methylbut-2-enyl diphosphate reductase (340 aa).

[4Fe-4S] cluster is bound at residue cysteine 21. The (2E)-4-hydroxy-3-methylbut-2-enyl diphosphate site is built by histidine 50 and histidine 83. Residues histidine 50 and histidine 83 each contribute to the dimethylallyl diphosphate site. 2 residues coordinate isopentenyl diphosphate: histidine 50 and histidine 83. Cysteine 105 lines the [4Fe-4S] cluster pocket. Histidine 133 provides a ligand contact to (2E)-4-hydroxy-3-methylbut-2-enyl diphosphate. Histidine 133 is a dimethylallyl diphosphate binding site. Histidine 133 is an isopentenyl diphosphate binding site. Residue glutamate 135 is the Proton donor of the active site. (2E)-4-hydroxy-3-methylbut-2-enyl diphosphate is bound at residue threonine 173. A [4Fe-4S] cluster-binding site is contributed by cysteine 203. (2E)-4-hydroxy-3-methylbut-2-enyl diphosphate-binding residues include serine 231, serine 232, asparagine 233, and serine 276. Dimethylallyl diphosphate-binding residues include serine 231, serine 232, asparagine 233, and serine 276. Serine 231, serine 232, asparagine 233, and serine 276 together coordinate isopentenyl diphosphate. The segment at 320-340 is disordered; sequence KARGEPLTRSATAGDRMNADR.

The protein belongs to the IspH family. Requires [4Fe-4S] cluster as cofactor.

It catalyses the reaction isopentenyl diphosphate + 2 oxidized [2Fe-2S]-[ferredoxin] + H2O = (2E)-4-hydroxy-3-methylbut-2-enyl diphosphate + 2 reduced [2Fe-2S]-[ferredoxin] + 2 H(+). The catalysed reaction is dimethylallyl diphosphate + 2 oxidized [2Fe-2S]-[ferredoxin] + H2O = (2E)-4-hydroxy-3-methylbut-2-enyl diphosphate + 2 reduced [2Fe-2S]-[ferredoxin] + 2 H(+). Its pathway is isoprenoid biosynthesis; dimethylallyl diphosphate biosynthesis; dimethylallyl diphosphate from (2E)-4-hydroxy-3-methylbutenyl diphosphate: step 1/1. The protein operates within isoprenoid biosynthesis; isopentenyl diphosphate biosynthesis via DXP pathway; isopentenyl diphosphate from 1-deoxy-D-xylulose 5-phosphate: step 6/6. Catalyzes the conversion of 1-hydroxy-2-methyl-2-(E)-butenyl 4-diphosphate (HMBPP) into a mixture of isopentenyl diphosphate (IPP) and dimethylallyl diphosphate (DMAPP). Acts in the terminal step of the DOXP/MEP pathway for isoprenoid precursor biosynthesis. The polypeptide is 4-hydroxy-3-methylbut-2-enyl diphosphate reductase (Acidothermus cellulolyticus (strain ATCC 43068 / DSM 8971 / 11B)).